A 190-amino-acid chain; its full sequence is Xanthine phosphoribosyltransferase (190 aa).

Residues Leu20 and Asn27 each contribute to the xanthine site. Ala128–Ala132 contacts 5-phospho-alpha-D-ribose 1-diphosphate. Residue Lys156 coordinates xanthine.

It belongs to the purine/pyrimidine phosphoribosyltransferase family. Xpt subfamily. As to quaternary structure, homodimer.

The protein localises to the cytoplasm. It catalyses the reaction XMP + diphosphate = xanthine + 5-phospho-alpha-D-ribose 1-diphosphate. Its pathway is purine metabolism; XMP biosynthesis via salvage pathway; XMP from xanthine: step 1/1. Converts the preformed base xanthine, a product of nucleic acid breakdown, to xanthosine 5'-monophosphate (XMP), so it can be reused for RNA or DNA synthesis. The polypeptide is Xanthine phosphoribosyltransferase (Pseudomonas fluorescens (strain SBW25)).